A 390-amino-acid polypeptide reads, in one-letter code: Lipid-A-disaccharide synthase (390 aa).

The protein belongs to the LpxB family.

The catalysed reaction is a lipid X + a UDP-2-N,3-O-bis[(3R)-3-hydroxyacyl]-alpha-D-glucosamine = a lipid A disaccharide + UDP + H(+). It participates in bacterial outer membrane biogenesis; LPS lipid A biosynthesis. Condensation of UDP-2,3-diacylglucosamine and 2,3-diacylglucosamine-1-phosphate to form lipid A disaccharide, a precursor of lipid A, a phosphorylated glycolipid that anchors the lipopolysaccharide to the outer membrane of the cell. This Haemophilus influenzae (strain 86-028NP) protein is Lipid-A-disaccharide synthase.